Consider the following 225-residue polypeptide: Ribose-5-phosphate isomerase A (225 aa).

Substrate-binding positions include 33 to 36 (TGST), 86 to 89 (DGAD), and 99 to 102 (KGGG). Glu-108 functions as the Proton acceptor in the catalytic mechanism. Lys-126 contacts substrate.

The protein belongs to the ribose 5-phosphate isomerase family. In terms of assembly, homodimer.

The enzyme catalyses aldehydo-D-ribose 5-phosphate = D-ribulose 5-phosphate. Its pathway is carbohydrate degradation; pentose phosphate pathway; D-ribose 5-phosphate from D-ribulose 5-phosphate (non-oxidative stage): step 1/1. Functionally, catalyzes the reversible conversion of ribose-5-phosphate to ribulose 5-phosphate. The protein is Ribose-5-phosphate isomerase A of Bordetella petrii (strain ATCC BAA-461 / DSM 12804 / CCUG 43448).